Consider the following 507-residue polypeptide: Histidine ammonia-lyase (507 aa).

Positions 141 to 143 (ASG) form a cross-link, 5-imidazolinone (Ala-Gly). Position 142 is a 2,3-didehydroalanine (Ser) (Ser-142).

This sequence belongs to the PAL/histidase family. In terms of processing, contains an active site 4-methylidene-imidazol-5-one (MIO), which is formed autocatalytically by cyclization and dehydration of residues Ala-Ser-Gly.

The protein localises to the cytoplasm. It catalyses the reaction L-histidine = trans-urocanate + NH4(+). It participates in amino-acid degradation; L-histidine degradation into L-glutamate; N-formimidoyl-L-glutamate from L-histidine: step 1/3. In Burkholderia cenocepacia (strain HI2424), this protein is Histidine ammonia-lyase.